We begin with the raw amino-acid sequence, 674 residues long: Linear primary-alkylsulfatase (674 aa).

A signal peptide spans 1-41; the sequence is MKLNALSTATHGSRSSPVKLWKFSTSFLLAASIIVSGQSWA. Zn(2+)-binding residues include His192, His194, Asp196, His197, Glu303, and Glu322. Sulfate-binding positions include 330-335 and Arg340; that span reads NTYSLR. His367 serves as a coordination point for Zn(2+). Sulfate is bound at residue Tyr428.

This sequence belongs to the metallo-beta-lactamase superfamily. Type III sulfatase family. As to quaternary structure, homodimer. Requires Zn(2+) as cofactor.

Its subcellular location is the periplasm. The catalysed reaction is a primary linear alkyl sulfate ester + H2O = a primary alcohol + sulfate + H(+). Its activity is regulated as follows. Inhibited by EDTA. Slightly activated in the presence of Ca(2+). Functionally, alkylsulfatase that cleaves primary alkyl sulfates such as sodium octyl sulfate and the widely used detergent sodium dodecyl sulfate (SDS). This is Linear primary-alkylsulfatase from Pseudomonas sp.